The sequence spans 483 residues: Bifunctional pantoate ligase/cytidylate kinase (483 aa).

The tract at residues 1-246 (MPTMGALHAG…CGSTRLIDHA (246 aa)) is pantoate--beta-alanine ligase. ATP is bound at residue 4–11 (MGALHAGH). His-11 serves as the catalytic Proton donor. Gln-34 contributes to the (R)-pantoate binding site. Gln-34 contributes to the beta-alanine binding site. 124–127 (GEKD) serves as a coordination point for ATP. Gln-130 is a (R)-pantoate binding site. ATP-binding positions include Val-153 and 161 to 164 (LSSR). Residues 247 to 483 (FLMTRQPLVA…AEEAWPTPQR (237 aa)) form a cytidylate kinase region.

In the N-terminal section; belongs to the pantothenate synthetase family. The protein in the C-terminal section; belongs to the cytidylate kinase family. Type 1 subfamily.

The protein resides in the cytoplasm. It carries out the reaction (R)-pantoate + beta-alanine + ATP = (R)-pantothenate + AMP + diphosphate + H(+). It catalyses the reaction CMP + ATP = CDP + ADP. The catalysed reaction is dCMP + ATP = dCDP + ADP. The protein operates within cofactor biosynthesis; (R)-pantothenate biosynthesis; (R)-pantothenate from (R)-pantoate and beta-alanine: step 1/1. In terms of biological role, catalyzes the condensation of pantoate with beta-alanine in an ATP-dependent reaction via a pantoyl-adenylate intermediate. Its function is as follows. Catalyzes the transfer of a phosphate group from ATP to either CMP or dCMP to form CDP or dCDP and ADP, respectively. The chain is Bifunctional pantoate ligase/cytidylate kinase from Synechococcus sp. (strain CC9902).